A 176-amino-acid polypeptide reads, in one-letter code: NAD(P)H-quinone oxidoreductase subunit J (176 aa).

It belongs to the complex I 30 kDa subunit family. NDH-1 can be composed of about 15 different subunits; different subcomplexes with different compositions have been identified which probably have different functions.

The protein resides in the cellular thylakoid membrane. The catalysed reaction is a plastoquinone + NADH + (n+1) H(+)(in) = a plastoquinol + NAD(+) + n H(+)(out). It catalyses the reaction a plastoquinone + NADPH + (n+1) H(+)(in) = a plastoquinol + NADP(+) + n H(+)(out). In terms of biological role, NDH-1 shuttles electrons from an unknown electron donor, via FMN and iron-sulfur (Fe-S) centers, to quinones in the respiratory and/or the photosynthetic chain. The immediate electron acceptor for the enzyme in this species is believed to be plastoquinone. Couples the redox reaction to proton translocation, and thus conserves the redox energy in a proton gradient. Cyanobacterial NDH-1 also plays a role in inorganic carbon-concentration. The polypeptide is NAD(P)H-quinone oxidoreductase subunit J (Prochlorococcus marinus (strain MIT 9515)).